The sequence spans 83 residues: RNA-binding protein Hfq (83 aa).

The Sm domain maps to Asp10–Val70.

It belongs to the Hfq family. As to quaternary structure, homohexamer.

RNA chaperone that binds small regulatory RNA (sRNAs) and mRNAs to facilitate mRNA translational regulation in response to envelope stress, environmental stress and changes in metabolite concentrations. Also binds with high specificity to tRNAs. This Pelotomaculum thermopropionicum (strain DSM 13744 / JCM 10971 / SI) protein is RNA-binding protein Hfq.